The following is a 397-amino-acid chain: Acetate kinase (397 aa).

Residue N8 coordinates Mg(2+). K15 contributes to the ATP binding site. R90 serves as a coordination point for substrate. D147 (proton donor/acceptor) is an active-site residue. Residues 207–211 (HLGAG), 283–285 (DMR), and 330–334 (GVGEN) each bind ATP. E383 serves as a coordination point for Mg(2+).

The protein belongs to the acetokinase family. As to quaternary structure, homodimer. Requires Mg(2+) as cofactor. Mn(2+) serves as cofactor.

It is found in the cytoplasm. The catalysed reaction is acetate + ATP = acetyl phosphate + ADP. It participates in metabolic intermediate biosynthesis; acetyl-CoA biosynthesis; acetyl-CoA from acetate: step 1/2. In terms of biological role, catalyzes the formation of acetyl phosphate from acetate and ATP. Can also catalyze the reverse reaction. This is Acetate kinase from Fructilactobacillus sanfranciscensis (Lactobacillus sanfranciscensis).